Reading from the N-terminus, the 367-residue chain is Leu/Ile/Val-binding protein BraC3 (367 aa).

A signal peptide spans 1-22 (MTLKTLTATLVASLAFAPLAHA).

The protein belongs to the leucine-binding protein family. The complex is composed of two ATP-binding proteins (BraF and BraG), two transmembrane proteins (BraD and BraE) and a solute-binding protein (BraC or BraC3).

It localises to the periplasm. Its function is as follows. Part of the ABC transporter complex BraDEFGC/C3 involved in transport of branched-chain amino acids Leu, Ile and Val (LIV). Essential for the development of bacteroids, the differentiated legume-symbiotic forms of this bacterium, and for the effective N(2) fixation by them. The polypeptide is Leu/Ile/Val-binding protein BraC3 (Rhizobium johnstonii (strain DSM 114642 / LMG 32736 / 3841) (Rhizobium leguminosarum bv. viciae)).